A 152-amino-acid polypeptide reads, in one-letter code: UPF0225 protein YchJ (152 aa).

Belongs to the UPF0225 family.

The polypeptide is UPF0225 protein YchJ (Escherichia coli O6:K15:H31 (strain 536 / UPEC)).